Reading from the N-terminus, the 422-residue chain is UPF0229 protein Spro_2732 (422 aa).

Basic and acidic residues predominate over residues 77–90 (PGNDHFVQNDRVER). Residues 77–109 (PGNDHFVQNDRVERPQGGGGGGSGQGNASQDGE) are disordered. Residues 92-101 (QGGGGGGSGQ) show a composition bias toward gly residues.

It belongs to the UPF0229 family.

This is UPF0229 protein Spro_2732 from Serratia proteamaculans (strain 568).